Here is a 410-residue protein sequence, read N- to C-terminus: Aspartic proteinase Asp1 (410 aa).

The N-terminal stretch at 1 to 23 (MTARLALLASLLLLLQLVPPSSA) is a signal peptide. A propeptide spans 24–46 (VVLELHGNVYPIGHFFVTMNIGD) (removed in mature form). The Peptidase A1 domain maps to 38–392 (FFVTMNIGDP…DSERSLLGWV (355 aa)). Active-site residues include Asp-56 and Asp-257.

Belongs to the peptidase A1 family. Expressed in pollen, nucellus, ovary wall, shoot and root meristem, coleoptiles of immature seeds, and somatic embryos.

Possesses protease activity in vitro. This chain is Aspartic proteinase Asp1 (ASP1), found in Oryza sativa subsp. indica (Rice).